The chain runs to 239 residues: tRNA (guanine-N(7)-)-methyltransferase (239 aa).

S-adenosyl-L-methionine contacts are provided by glutamate 68, glutamate 93, aspartate 120, and aspartate 143. Aspartate 143 is a catalytic residue. Substrate-binding positions include lysine 147, aspartate 180, and 217–220; that span reads TKFE.

The protein belongs to the class I-like SAM-binding methyltransferase superfamily. TrmB family.

The catalysed reaction is guanosine(46) in tRNA + S-adenosyl-L-methionine = N(7)-methylguanosine(46) in tRNA + S-adenosyl-L-homocysteine. The protein operates within tRNA modification; N(7)-methylguanine-tRNA biosynthesis. Catalyzes the formation of N(7)-methylguanine at position 46 (m7G46) in tRNA. The polypeptide is tRNA (guanine-N(7)-)-methyltransferase (Vibrio vulnificus (strain CMCP6)).